Here is a 175-residue protein sequence, read N- to C-terminus: MNAVRRKKLIWVAATLAGAIIAVLLVIYAIGQQTDYYFDPTAIAAGDAPQNKRIRAGGMVVKDSVRRDPNDDLKVQFEITDFNATVPVSYQGILPDLFAENSGVVATGEMQGKVFVASEVLAKHDENYMPPEVAASLKEDHAAKGVTPTSEQFSPAIPVKQTAGEGNHTTSTLQE.

The Cytoplasmic segment spans residues 1–8 (MNAVRRKK). Residues 9 to 29 (LIWVAATLAGAIIAVLLVIYA) traverse the membrane as a helical; Signal-anchor for type II membrane protein segment. The Periplasmic portion of the chain corresponds to 30–175 (IGQQTDYYFD…GNHTTSTLQE (146 aa)). Heme-binding residues include His124 and Tyr128. Positions 142-175 (AAKGVTPTSEQFSPAIPVKQTAGEGNHTTSTLQE) are disordered.

Belongs to the CcmE/CycJ family.

It is found in the cell inner membrane. Heme chaperone required for the biogenesis of c-type cytochromes. Transiently binds heme delivered by CcmC and transfers the heme to apo-cytochromes in a process facilitated by CcmF and CcmH. The sequence is that of Cytochrome c-type biogenesis protein CcmE from Psychrobacter sp. (strain PRwf-1).